The following is an 88-amino-acid chain: UPF0297 protein Ccel_2240 (88 aa).

Belongs to the UPF0297 family.

The chain is UPF0297 protein Ccel_2240 from Ruminiclostridium cellulolyticum (strain ATCC 35319 / DSM 5812 / JCM 6584 / H10) (Clostridium cellulolyticum).